Reading from the N-terminus, the 931-residue chain is Valine--tRNA ligase (931 aa).

A 'HIGH' region motif is present at residues 43-53 (PNVTGALHIGH). A disordered region spans residues 351–370 (IPHTDKDGNAHDAEPRTIQT). Residues 353–365 (HTDKDGNAHDAEP) are compositionally biased toward basic and acidic residues. The 'KMSKS' region motif lies at 552–556 (KMSKS). K555 lines the ATP pocket. A disordered region spans residues 691-717 (LQGRGLGEGDEAVPAPADGPLSPALSP). Residues 864–930 (VIDIAAERER…DRLSAALARL (67 aa)) are a coiled coil.

This sequence belongs to the class-I aminoacyl-tRNA synthetase family. ValS type 1 subfamily. In terms of assembly, monomer.

It is found in the cytoplasm. The enzyme catalyses tRNA(Val) + L-valine + ATP = L-valyl-tRNA(Val) + AMP + diphosphate. Its function is as follows. Catalyzes the attachment of valine to tRNA(Val). As ValRS can inadvertently accommodate and process structurally similar amino acids such as threonine, to avoid such errors, it has a 'posttransfer' editing activity that hydrolyzes mischarged Thr-tRNA(Val) in a tRNA-dependent manner. The chain is Valine--tRNA ligase from Sphingopyxis alaskensis (strain DSM 13593 / LMG 18877 / RB2256) (Sphingomonas alaskensis).